A 148-amino-acid chain; its full sequence is Hemoglobin subunit gamma (148 aa).

The Globin domain occupies 3 to 148; sequence HFTAEEKAII…VAIAMGHKYH (146 aa). Heme b contacts are provided by His64 and His93.

This sequence belongs to the globin family. As to quaternary structure, heterotetramer of two alpha chains and two gamma chains in fetal hemoglobin (Hb F). In terms of tissue distribution, red blood cells.

In terms of biological role, gamma chains make up the fetal hemoglobin F, in combination with alpha chains. The protein is Hemoglobin subunit gamma (HBG) of Carlito syrichta (Philippine tarsier).